The following is a 406-amino-acid chain: Imidazolonepropionase (406 aa).

Fe(3+)-binding residues include His-75 and His-77. Positions 75 and 77 each coordinate Zn(2+). The 4-imidazolone-5-propanoate site is built by Arg-84, Tyr-147, and His-180. Residue Tyr-147 coordinates N-formimidoyl-L-glutamate. A Fe(3+)-binding site is contributed by His-245. His-245 is a binding site for Zn(2+). Gln-248 is a 4-imidazolone-5-propanoate binding site. A Fe(3+)-binding site is contributed by Asp-320. A Zn(2+)-binding site is contributed by Asp-320. Residues Asn-322 and Gly-324 each contribute to the N-formimidoyl-L-glutamate site. Thr-325 is a 4-imidazolone-5-propanoate binding site.

It belongs to the metallo-dependent hydrolases superfamily. HutI family. The cofactor is Zn(2+). It depends on Fe(3+) as a cofactor.

The protein localises to the cytoplasm. The catalysed reaction is 4-imidazolone-5-propanoate + H2O = N-formimidoyl-L-glutamate. The protein operates within amino-acid degradation; L-histidine degradation into L-glutamate; N-formimidoyl-L-glutamate from L-histidine: step 3/3. In terms of biological role, catalyzes the hydrolytic cleavage of the carbon-nitrogen bond in imidazolone-5-propanoate to yield N-formimidoyl-L-glutamate. It is the third step in the universal histidine degradation pathway. The protein is Imidazolonepropionase of Hyphomonas neptunium (strain ATCC 15444).